We begin with the raw amino-acid sequence, 475 residues long: TOM1-like protein 1 (475 aa).

Positions 22–154 (ATFAGVQTED…DLLKKGVQFP (133 aa)) constitute a VHS domain. Residues 155 to 175 (PLDGEPETKQEAGQISPSRPT) are disordered. Residues 165-175 (EAGQISPSRPT) are compositionally biased toward polar residues. Residue serine 170 is modified to Phosphoserine. The GAT domain occupies 199 to 287 (EQIGKLHSEL…AILGYERFTR (89 aa)). Residues 296–317 (KRNPTEANQTSSEPSAPSCDLL) form a disordered region. The segment covering 300–310 (TEANQTSSEPS) has biased composition (polar residues). At serine 313 the chain carries Phosphoserine. The segment at 392–395 (YDNF) is interaction with GRB2. Residues 421-425 (LPPLP) carry the SH3-binding motif. The interaction with PIK3R1 stretch occupies residues 442–445 (YEVM). Tyrosine 458 carries the post-translational modification Phosphotyrosine. Positions 458–461 (YEEI) match the SH2-binding motif.

Belongs to the TOM1 family. Interacts with the SH2 and SH3 domains of FYN when phosphorylated. Also interacts with GRB2 and PIK3R1 when phosphorylated. Interacts with LYN. Post-translationally, phosphorylated on tyrosines by FYN and LYN.

The protein resides in the golgi apparatus. The protein localises to the golgi stack. It localises to the endosome membrane. It is found in the cytoplasm. Its subcellular location is the membrane. In terms of biological role, probable adapter protein involved in signaling pathways. Interacts with the SH2 and SH3 domains of various signaling proteins when it is phosphorylated. May promote FYN activation, possibly by disrupting intramolecular SH3-dependent interactions. This Rattus norvegicus (Rat) protein is TOM1-like protein 1 (Tom1l1).